The following is a 102-amino-acid chain: uncharacterized protein (102 aa).

The helical transmembrane segment at 77-96 (FFSACVAKSYSSFFISICIL) threads the bilayer.

Its subcellular location is the membrane. This is an uncharacterized protein from Saccharomyces cerevisiae (strain ATCC 204508 / S288c) (Baker's yeast).